A 347-amino-acid chain; its full sequence is Fructose-1,6-bisphosphatase class 1 2 (347 aa).

4 residues coordinate Mg(2+): Glu-92, Asp-111, Leu-113, and Asp-114. Substrate-binding positions include 114–117 (DGSS) and Asn-202. Glu-274 is a Mg(2+) binding site.

The protein belongs to the FBPase class 1 family. In terms of assembly, homotetramer. The cofactor is Mg(2+).

It localises to the cytoplasm. It catalyses the reaction beta-D-fructose 1,6-bisphosphate + H2O = beta-D-fructose 6-phosphate + phosphate. It participates in carbohydrate biosynthesis; Calvin cycle. In Bradyrhizobium sp. (strain BTAi1 / ATCC BAA-1182), this protein is Fructose-1,6-bisphosphatase class 1 2.